The primary structure comprises 123 residues: Large ribosomal subunit protein uL14c (123 aa).

The protein belongs to the universal ribosomal protein uL14 family. Part of the 50S ribosomal subunit.

The protein localises to the plastid. It localises to the chloroplast. Its function is as follows. Binds to 23S rRNA. This is Large ribosomal subunit protein uL14c from Saccharum hybrid (Sugarcane).